A 2060-amino-acid polypeptide reads, in one-letter code: Unconventional myosin-X (2060 aa).

An N-acetylmethionine modification is found at M1. The Myosin motor domain maps to 63–739 (EGVDDMASLT…LEQKLEKRRE (677 aa)). Residues N104, Y113, 160-165 (GAGKTE), and N215 each bind ATP. Residues 619-641 (LHSLMATLSSSNPFFVRCIKPNT) form an actin-binding region. IQ domains follow at residues 742–771 (IDRA…GVVT), 765–794 (VLCG…AAIV), and 788–817 (LKKA…EKRE). The tract at residues 814-882 (EKRELEERKR…LTRELEKQRE (69 aa)) is SAH. The stretch at 883–933 (NKQVEEILRLEKEIEDLQRMKEQQELSLTEASLQKLQQLRDEELRRLEDEA) forms a coiled coil. Phosphoserine is present on residues S961, S964, and S967. Disordered stretches follow at residues 971-1039 (SELA…PYMN) and 1064-1088 (SLHN…PSPD). The segment covering 991–1005 (PEEEVDEGFEADDDA) has biased composition (acidic residues). Residues 1064–1083 (SLHNSSSGESTYCMPQNNGD) show a composition bias toward polar residues. Residue T1160 is modified to Phosphothreonine. PH domains are found at residues 1214–1312 (EALK…QVHS) and 1394–1499 (EFIV…NVTD). The 149-residue stretch at 1549–1697 (LPYGDINLNL…PSRDEIEALI (149 aa)) folds into the MyTH4 domain. Positions 1702 to 2046 (MTSTVYCHGG…AYISMIVKKR (345 aa)) constitute an FERM domain.

This sequence belongs to the TRAFAC class myosin-kinesin ATPase superfamily. Myosin family. In terms of assembly, monomer, when in an inactive conformation in the cytosol. Homodimer in its active, membrane-bound conformation; antiparallel coiled coil-mediated dimer formation. Interacts with ECPAS. Interacts with DCC and ITGB5; the presence of DCC inhibits ITGB5 binding. Interacts with tubulin; ITGB5 or DCC binding inhibits tubulin binding. Interacts strongly with CALM3 and weakly with CALM, the CALM3 interaction is essential for function in filopodial extension and motility. Interacts with ITGB1, ITGB3 and ITGB5. Interacts with NEO1. Interacts with VASP.

The protein resides in the cytoplasm. Its subcellular location is the cytosol. The protein localises to the cell projection. It localises to the lamellipodium. It is found in the ruffle. The protein resides in the cytoskeleton. Its subcellular location is the filopodium tip. The protein localises to the cell cortex. It localises to the filopodium membrane. It is found in the cell membrane. Myosins are actin-based motor molecules with ATPase activity. Unconventional myosins serve in intracellular movements. MYO10 binds to actin filaments and actin bundles and functions as a plus end-directed motor. Moves with higher velocity and takes larger steps on actin bundles than on single actin filaments. The tail domain binds to membranous compartments containing phosphatidylinositol 3,4,5-trisphosphate or integrins, and mediates cargo transport along actin filaments. Regulates cell shape, cell spreading and cell adhesion. Stimulates the formation and elongation of filopodia. In hippocampal neurons it induces the formation of dendritic filopodia by trafficking the actin-remodeling protein VASP to the tips of filopodia, where it promotes actin elongation. Plays a role in formation of the podosome belt in osteoclasts. The polypeptide is Unconventional myosin-X (Myo10) (Rattus norvegicus (Rat)).